A 333-amino-acid polypeptide reads, in one-letter code: Phenylalanine--tRNA ligase alpha subunit (333 aa).

Residue Glu248 coordinates Mg(2+).

Belongs to the class-II aminoacyl-tRNA synthetase family. Phe-tRNA synthetase alpha subunit type 1 subfamily. Tetramer of two alpha and two beta subunits. It depends on Mg(2+) as a cofactor.

It localises to the cytoplasm. The catalysed reaction is tRNA(Phe) + L-phenylalanine + ATP = L-phenylalanyl-tRNA(Phe) + AMP + diphosphate + H(+). In Ureaplasma parvum serovar 3 (strain ATCC 27815 / 27 / NCTC 11736), this protein is Phenylalanine--tRNA ligase alpha subunit.